The following is a 288-amino-acid chain: Cyclic UMP-AMP synthase (288 aa).

Residues 1 to 23 form a disordered region; that stretch reads MPVPESQLERWSHQGATTTAKKT. Position 46 (Gln-46) interacts with UTP. Residue 46 to 48 participates in ATP binding; it reads QGS. 2 residues coordinate Mg(2+): Asp-60 and Asp-62. UTP contacts are provided by residues Asp-62 and 116–120; that span reads RKTLK. Asp-129 contributes to the Mg(2+) binding site. Asn-166 lines the UTP pocket. ATP-binding residues include Lys-194, Ser-212, and Glu-265.

The protein belongs to the CD-NTase family. E01 subfamily. Mg(2+) serves as cofactor.

The enzyme catalyses UTP + ATP = 3',3'-cUAMP + 2 diphosphate. Functionally, cyclic nucleotide synthase (second messenger synthase) of a CBASS antivirus system. CBASS (cyclic oligonucleotide-based antiphage signaling system) provides immunity against bacteriophage. The CD-NTase protein synthesizes cyclic nucleotides in response to infection; these serve as specific second messenger signals. The signals activate a diverse range of effectors, leading to bacterial cell death and thus abortive phage infection. A type I-B(UU) CBASS system. In terms of biological role, cyclic dinucleotide synthase that catalyzes the synthesis of 3'3'-cyclic UMP-AMP (cUMP-AMP) from UTP and ATP, a second messenger for cell signal transduction. This Rhodothermus marinus (strain SG0.5JP17-172) protein is Cyclic UMP-AMP synthase.